The following is a 570-amino-acid chain: D-xylulose kinase A (570 aa).

Residues His-95, Arg-166, Asp-282, and Asn-283 each coordinate substrate. ATP-binding positions include Trp-364, 469-470 (GG), and Asn-473.

This sequence belongs to the FGGY kinase family.

The protein resides in the cytoplasm. The enzyme catalyses D-xylulose + ATP = D-xylulose 5-phosphate + ADP + H(+). Functionally, highly specific D-xylulose kinase which participates in the catabolism of xylose. Xylose is a major component of hemicelluloses such as xylan. Most fungi utilize D-xylose via three enzymatic reactions, xylose reductase (XR), xylitol dehydrogenase (XDH), and xylulokinase, to form xylulose 5-phosphate, which enters pentose phosphate pathway. The protein is D-xylulose kinase A (xkiA) of Aspergillus niger.